Reading from the N-terminus, the 416-residue chain is Serine/threonine transporter SstT (416 aa).

9 helical membrane-spanning segments follow: residues 15–35 (SLVS…MFMP), 49–69 (VGAL…AAII), 82–102 (ILLL…VASF), 141–161 (ALMD…GIAM), 192–212 (LGIL…ALFG), 217–237 (LVVL…IIVF), 288–308 (VSIP…ITVL), 330–350 (VVAT…LLLI), and 356–376 (LFGI…IIGV).

It belongs to the dicarboxylate/amino acid:cation symporter (DAACS) (TC 2.A.23) family.

The protein localises to the cell inner membrane. The enzyme catalyses L-serine(in) + Na(+)(in) = L-serine(out) + Na(+)(out). It catalyses the reaction L-threonine(in) + Na(+)(in) = L-threonine(out) + Na(+)(out). Functionally, involved in the import of serine and threonine into the cell, with the concomitant import of sodium (symport system). The protein is Serine/threonine transporter SstT of Aeromonas salmonicida (strain A449).